A 219-amino-acid chain; its full sequence is Redox-sensing transcriptional repressor Rex (219 aa).

The H-T-H motif DNA-binding region spans 18–57 (LYYRFIQSLYNSGKLRVSSAELSEAVKVDSATIRRDFSYF). 92–97 (GVGHLG) contributes to the NAD(+) binding site.

This sequence belongs to the transcriptional regulatory Rex family. In terms of assembly, homodimer.

It localises to the cytoplasm. Functionally, modulates transcription in response to changes in cellular NADH/NAD(+) redox state. This Exiguobacterium sibiricum (strain DSM 17290 / CCUG 55495 / CIP 109462 / JCM 13490 / 255-15) protein is Redox-sensing transcriptional repressor Rex.